The sequence spans 160 residues: Ureidoglycolate lyase (160 aa).

Belongs to the ureidoglycolate lyase family. In terms of assembly, homodimer. Requires Ni(2+) as cofactor.

It catalyses the reaction (S)-ureidoglycolate = urea + glyoxylate. It participates in nitrogen metabolism; (S)-allantoin degradation. Functionally, catalyzes the catabolism of the allantoin degradation intermediate (S)-ureidoglycolate, generating urea and glyoxylate. Involved in the anaerobic utilization of allantoin as sole nitrogen source. Reinforces the induction of genes involved in the degradation of allantoin and glyoxylate by producing glyoxylate. This is Ureidoglycolate lyase from Escherichia coli (strain SMS-3-5 / SECEC).